Consider the following 994-residue polypeptide: Probable beta-galactosidase C (994 aa).

Residues methionine 1 to alanine 19 form the signal peptide. Position 78 (tyrosine 78) interacts with substrate. Asparagine 88 carries an N-linked (GlcNAc...) asparagine glycan. Asparagine 123, alanine 124, glutamate 125, and asparagine 183 together coordinate substrate. Glutamate 184 serves as the catalytic Proton donor. Tyrosine 247 contacts substrate. A disulfide bond links cysteine 253 and cysteine 301. The N-linked (GlcNAc...) asparagine glycan is linked to asparagine 272. The Nucleophile role is filled by glutamate 283. A substrate-binding site is contributed by tyrosine 350. N-linked (GlcNAc...) asparagine glycosylation is found at asparagine 388, asparagine 407, asparagine 433, asparagine 500, asparagine 514, asparagine 521, asparagine 584, asparagine 600, asparagine 674, asparagine 712, asparagine 717, asparagine 757, asparagine 861, and asparagine 969.

This sequence belongs to the glycosyl hydrolase 35 family.

The protein localises to the secreted. The enzyme catalyses Hydrolysis of terminal non-reducing beta-D-galactose residues in beta-D-galactosides.. Cleaves beta-linked terminal galactosyl residues from gangliosides, glycoproteins, and glycosaminoglycans. This Aspergillus niger (strain ATCC MYA-4892 / CBS 513.88 / FGSC A1513) protein is Probable beta-galactosidase C (lacC).